We begin with the raw amino-acid sequence, 132 residues long: Holo-[acyl-carrier-protein] synthase (132 aa).

Aspartate 8 and glutamate 62 together coordinate Mg(2+).

Belongs to the P-Pant transferase superfamily. AcpS family. Mg(2+) serves as cofactor.

The protein localises to the cytoplasm. It carries out the reaction apo-[ACP] + CoA = holo-[ACP] + adenosine 3',5'-bisphosphate + H(+). In terms of biological role, transfers the 4'-phosphopantetheine moiety from coenzyme A to a Ser of acyl-carrier-protein. The sequence is that of Holo-[acyl-carrier-protein] synthase from Leptothrix cholodnii (strain ATCC 51168 / LMG 8142 / SP-6) (Leptothrix discophora (strain SP-6)).